A 273-amino-acid chain; its full sequence is Type III pantothenate kinase (273 aa).

Asp7–Lys14 is an ATP binding site. Substrate contacts are provided by residues Phe119 and Gly124–Arg127. The active-site Proton acceptor is Asp126. Asp146 is a K(+) binding site. Position 149 (Thr149) interacts with ATP. Thr206 is a substrate binding site.

It belongs to the type III pantothenate kinase family. Homodimer. The cofactor is NH4(+). It depends on K(+) as a cofactor.

It localises to the cytoplasm. It carries out the reaction (R)-pantothenate + ATP = (R)-4'-phosphopantothenate + ADP + H(+). The protein operates within cofactor biosynthesis; coenzyme A biosynthesis; CoA from (R)-pantothenate: step 1/5. Catalyzes the phosphorylation of pantothenate (Pan), the first step in CoA biosynthesis. This Rhodopirellula baltica (strain DSM 10527 / NCIMB 13988 / SH1) protein is Type III pantothenate kinase.